The chain runs to 307 residues: Type 2A encapsulin shell protein (307 aa).

The protein belongs to the encapsulin family. Family 2A subfamily. As to quaternary structure, homooligomeric. The encapsulin nanocompartment is formed by 60 subunits; monomers form pentamers which assemble to form shells. There are 12 charged pores where the pentamers meet as well as 3-fold axis channels and dimer channels. The N-terminus is blocked.

The protein localises to the encapsulin nanocompartment. The protein resides in the cytoplasm. Its subcellular location is the cytosol. It localises to the cell membrane. Functionally, shell component of a type 2A encapsulin nanocompartment. Forms encapsulin nanocompartments about 24 nm in diameter from 60 monomers. Probably encapsulates at least cysteine desulfurase (CyD, AC O32975) and allows passage of cysteine into its interior, probably involved in sulfur metabolism. Expression in M.smegmatis generates a multimeric protein, whereas expression in E.coli does not. The protein is Type 2A encapsulin shell protein of Mycobacterium leprae (strain TN).